Reading from the N-terminus, the 190-residue chain is Ferric nitrobindin-like protein (190 aa).

A GXWXGXG motif is present at residues 20-26 (GNWAGAG).

Belongs to the nitrobindin family.

The protein is Ferric nitrobindin-like protein of Streptomyces griseus subsp. griseus (strain JCM 4626 / CBS 651.72 / NBRC 13350 / KCC S-0626 / ISP 5235).